The chain runs to 312 residues: uncharacterized protein (312 aa).

6 helical membrane passes run 9–29 (LTLT…GLFI), 115–135 (LATL…IGFI), 187–207 (ITIA…DYIT), 224–244 (ITVA…AGEF), 264–284 (ILSS…IYGF), and 292–312 (MIST…TLIL).

The protein localises to the cell membrane. This is an uncharacterized protein from Methanocaldococcus jannaschii (strain ATCC 43067 / DSM 2661 / JAL-1 / JCM 10045 / NBRC 100440) (Methanococcus jannaschii).